A 235-amino-acid chain; its full sequence is Glucosamine-6-phosphate deaminase (235 aa).

The Proton acceptor; for enolization step role is filled by aspartate 62. The For ring-opening step role is filled by asparagine 128. The Proton acceptor; for ring-opening step role is filled by histidine 130. The For ring-opening step role is filled by glutamate 135.

Belongs to the glucosamine/galactosamine-6-phosphate isomerase family. NagB subfamily.

The enzyme catalyses alpha-D-glucosamine 6-phosphate + H2O = beta-D-fructose 6-phosphate + NH4(+). The protein operates within amino-sugar metabolism; N-acetylneuraminate degradation; D-fructose 6-phosphate from N-acetylneuraminate: step 5/5. Functionally, catalyzes the reversible isomerization-deamination of glucosamine 6-phosphate (GlcN6P) to form fructose 6-phosphate (Fru6P) and ammonium ion. In Streptococcus sanguinis (strain SK36), this protein is Glucosamine-6-phosphate deaminase.